Consider the following 107-residue polypeptide: Sperm-specific class P protein 32 (107 aa).

The disordered stretch occupies residues 1–20 (MLTIEPPSATFPASGGSSTH). The MSP domain maps to 1–107 (MLTIEPPSAT…GDVTILLKTN (107 aa)).

In terms of tissue distribution, expressed at higher level in testis.

This is Sperm-specific class P protein 32 (ssp-32) from Caenorhabditis elegans.